A 938-amino-acid chain; its full sequence is Isoleucine--tRNA ligase (938 aa).

The short motif at 58 to 68 is the 'HIGH' region element; the sequence is PYANGSIHIGH. Lys183 bears the N6-acetyllysine mark. Glu561 serves as a coordination point for L-isoleucyl-5'-AMP. The short motif at 602 to 606 is the 'KMSKS' region element; sequence KMSKS. Lys605 provides a ligand contact to ATP. Residues Cys901, Cys904, Cys921, and Cys924 each coordinate Zn(2+).

The protein belongs to the class-I aminoacyl-tRNA synthetase family. IleS type 1 subfamily. In terms of assembly, monomer. Zn(2+) is required as a cofactor.

The protein resides in the cytoplasm. The enzyme catalyses tRNA(Ile) + L-isoleucine + ATP = L-isoleucyl-tRNA(Ile) + AMP + diphosphate. Catalyzes the attachment of isoleucine to tRNA(Ile). As IleRS can inadvertently accommodate and process structurally similar amino acids such as valine, to avoid such errors it has two additional distinct tRNA(Ile)-dependent editing activities. One activity is designated as 'pretransfer' editing and involves the hydrolysis of activated Val-AMP. The other activity is designated 'posttransfer' editing and involves deacylation of mischarged Val-tRNA(Ile). The sequence is that of Isoleucine--tRNA ligase from Escherichia coli (strain 55989 / EAEC).